A 752-amino-acid chain; its full sequence is Polyribonucleotide nucleotidyltransferase (752 aa).

D542 and D548 together coordinate Mg(2+). In terms of domain architecture, KH spans 608 to 667; sequence PRITTIQIPVSKIGELIGPKGKNINALTEETGANISIEDDGTVFISAASGEAAEAAIEKI. One can recognise an S1 motif domain in the interval 679–748; sequence GERFLGTVVK…NRGKISLVPV (70 aa).

The protein belongs to the polyribonucleotide nucleotidyltransferase family. The cofactor is Mg(2+).

It localises to the cytoplasm. It carries out the reaction RNA(n+1) + phosphate = RNA(n) + a ribonucleoside 5'-diphosphate. Its function is as follows. Involved in mRNA degradation. Catalyzes the phosphorolysis of single-stranded polyribonucleotides processively in the 3'- to 5'-direction. The chain is Polyribonucleotide nucleotidyltransferase from Corynebacterium efficiens (strain DSM 44549 / YS-314 / AJ 12310 / JCM 11189 / NBRC 100395).